We begin with the raw amino-acid sequence, 444 residues long: Nuclear envelope integral membrane protein 1 (444 aa).

Positions 1 to 43 (MAGGMKVAVSPAVGPGPWGSGVGGGGTVRLLLILSGCLVYGTA) are cleaved as a signal peptide. N-linked (GlcNAc...) asparagine glycosylation is present at Asn125. Transmembrane regions (helical) follow at residues 161–181 (PKLF…DLLS), 186–206 (FYYS…IIFI), 216–236 (PIYV…QLVF), 245–265 (CYWQ…FAVC), and 289–309 (LCFM…IIIA). The interval 186–297 (FYYSTGMTVG…GLCFMYSGIQ (112 aa)) is a; required for its colocalization with lamins at the nuclear envelope. The b; required for interaction with RAN-GTP stretch occupies residues 336-405 (PVPPRLLTEE…LTPNEVSVHE (70 aa)). The segment at 336–444 (PVPPRLLTEE…PAITQNNFLT (109 aa)) is required for nuclear localization. Phosphoserine is present on residues Ser368, Ser424, and Ser425.

It belongs to the NEMP family. As to quaternary structure, homooligomer. Interacts with RAN-GTP. Interacts with EMD. In terms of processing, phosphorylation may regulate its interaction with RAN-GTP.

The protein resides in the nucleus inner membrane. Its subcellular location is the nucleus envelope. Its function is as follows. Together with EMD, contributes to nuclear envelope stiffness in germ cells. Required for female fertility. Essential for normal erythropoiesis. Required for efficient nuclear envelope opening and enucleation during the late stages of erythroblast maturation. The protein is Nuclear envelope integral membrane protein 1 (NEMP1) of Homo sapiens (Human).